The following is a 180-amino-acid chain: Small ribosomal subunit protein uS4 (180 aa).

Residues 103 to 174 enclose the S4 RNA-binding domain; sequence RRLQTIVYKK…HPERMMIEKA (72 aa).

The protein belongs to the universal ribosomal protein uS4 family. Part of the 30S ribosomal subunit. Contacts protein S5. The interaction surface between S4 and S5 is involved in control of translational fidelity.

In terms of biological role, one of the primary rRNA binding proteins, it binds directly to 16S rRNA where it nucleates assembly of the body of the 30S subunit. With S5 and S12 plays an important role in translational accuracy. This chain is Small ribosomal subunit protein uS4, found in Pyrococcus abyssi (strain GE5 / Orsay).